Reading from the N-terminus, the 610-residue chain is UvrABC system protein C (610 aa).

A GIY-YIG domain is found at 16–94; it reads SQPGVYSMYD…IKLYQPRYNV (79 aa). A UVR domain is found at 204 to 239; sequence QQVLNQLVERMELASRALNFEDAAHARDQIQAVRRV.

Belongs to the UvrC family. Interacts with UvrB in an incision complex.

The protein localises to the cytoplasm. Functionally, the UvrABC repair system catalyzes the recognition and processing of DNA lesions. UvrC both incises the 5' and 3' sides of the lesion. The N-terminal half is responsible for the 3' incision and the C-terminal half is responsible for the 5' incision. This Sodalis glossinidius (strain morsitans) protein is UvrABC system protein C.